The chain runs to 134 residues: Small ribosomal subunit protein uS11 (134 aa).

The protein belongs to the universal ribosomal protein uS11 family. Part of the 30S ribosomal subunit. Interacts with proteins S7 and S18. Binds to IF-3.

Located on the platform of the 30S subunit, it bridges several disparate RNA helices of the 16S rRNA. Forms part of the Shine-Dalgarno cleft in the 70S ribosome. The chain is Small ribosomal subunit protein uS11 from Polaromonas sp. (strain JS666 / ATCC BAA-500).